We begin with the raw amino-acid sequence, 172 residues long: MKLVVAAVLAMAASRWRRLSAHGQVPSSTCADMLPVHGNAMPSTALPYTITVSPTSVNGGDTVRVHISGTEEFRGVYLQRGGAKSSRRVPAARRREQQDRPVRLPAGHNNAFSYISRTPLDTLDIDWKAPYTSDEIVFRATFVKSFSEFWVGVESPKITLGPLRQLDNAVAA.

Positions 1–21 (MKLVVAAVLAMAASRWRRLSA) are cleaved as a signal peptide. One can recognise a Reelin domain in the interval 22–172 (HGQVPSSTCA…LRQLDNAVAA (151 aa)).

Belongs to the insect defense protein family. In adults, in hemolymph.

It localises to the secreted. Its function is as follows. May have antimicrobial activity. This Locusta migratoria (Migratory locust) protein is Putative defense protein.